The sequence spans 92 residues: Putative phosphotransferase enzyme IIB component SgcB (92 aa).

In terms of domain architecture, PTS EIIB type-2 spans 1-92 (MKKILVACGT…KQQIKALLTQ (92 aa)). Catalysis depends on cysteine 8, which acts as the Phosphocysteine intermediate.

It localises to the cytoplasm. In terms of biological role, the phosphoenolpyruvate-dependent sugar phosphotransferase system (sugar PTS), a major carbohydrate active -transport system, catalyzes the phosphorylation of incoming sugar substrates concomitantly with their translocation across the cell membrane. The sequence is that of Putative phosphotransferase enzyme IIB component SgcB (sgcB) from Escherichia coli (strain K12).